The chain runs to 524 residues: Glucose-6-phosphate isomerase (524 aa).

Glu346 acts as the Proton donor in catalysis. Catalysis depends on residues His377 and Lys492.

This sequence belongs to the GPI family.

It is found in the cytoplasm. The enzyme catalyses alpha-D-glucose 6-phosphate = beta-D-fructose 6-phosphate. It functions in the pathway carbohydrate biosynthesis; gluconeogenesis. It participates in carbohydrate degradation; glycolysis; D-glyceraldehyde 3-phosphate and glycerone phosphate from D-glucose: step 2/4. In terms of biological role, catalyzes the reversible isomerization of glucose-6-phosphate to fructose-6-phosphate. This is Glucose-6-phosphate isomerase from Chlamydia trachomatis serovar A (strain ATCC VR-571B / DSM 19440 / HAR-13).